Here is a 316-residue protein sequence, read N- to C-terminus: uncharacterized protein (316 aa).

An S4 RNA-binding domain is found at 26 to 98; sequence ERIDRFLAGA…IPLDVVYEDA (73 aa). Residue Asp148 is part of the active site.

Belongs to the pseudouridine synthase RluA family.

The enzyme catalyses a uridine in RNA = a pseudouridine in RNA. This is an uncharacterized protein from Chloroflexus aurantiacus (strain ATCC 29366 / DSM 635 / J-10-fl).